The following is a 298-amino-acid chain: Single myb histone 2 (298 aa).

Positions 1–61 (MGVPKQRWTP…KWRNLSVTAG (61 aa)) constitute an HTH myb-type domain. Positions 28–57 (WRTILRDSDFSALLRLRSNVDLKDKWRNLS) form a DNA-binding region, H-T-H motif. The region spanning 124–192 (SVARLDDLIV…KVNQKYRIAP (69 aa)) is the H15 domain. A coiled-coil region spans residues 237–278 (EEAAAFAAKAVAEAEVAMAEAEEAARVAEAAENDAEAAKAFL).

It belongs to the histone H1/H5 family. SMH subfamily. As to quaternary structure, forms a homodimer and heterodimers.

The protein localises to the nucleus. Its subcellular location is the chromosome. It is found in the nucleolus. It localises to the telomere. Functionally, binds preferentially double-stranded telomeric repeats, but may also bind to the single telomeric strand. This is Single myb histone 2 (SMH2) from Zea mays (Maize).